The chain runs to 190 residues: Elongation factor P (190 aa).

Belongs to the elongation factor P family.

It localises to the cytoplasm. The protein operates within protein biosynthesis; polypeptide chain elongation. In terms of biological role, involved in peptide bond synthesis. Stimulates efficient translation and peptide-bond synthesis on native or reconstituted 70S ribosomes in vitro. Probably functions indirectly by altering the affinity of the ribosome for aminoacyl-tRNA, thus increasing their reactivity as acceptors for peptidyl transferase. The chain is Elongation factor P from Hyphomonas neptunium (strain ATCC 15444).